Consider the following 268-residue polypeptide: Shikimate dehydrogenase (NADP(+)) (268 aa).

Shikimate is bound by residues 14-16 and Thr-61; that span reads SKS. Lys-65 serves as the catalytic Proton acceptor. Asn-86 and Asp-102 together coordinate shikimate. NADP(+)-binding positions include 126–130, 149–154, and Met-213; these read GAGGA and NRTFSK. Tyr-215 contributes to the shikimate binding site. Gly-238 provides a ligand contact to NADP(+).

Belongs to the shikimate dehydrogenase family. Homodimer.

The enzyme catalyses shikimate + NADP(+) = 3-dehydroshikimate + NADPH + H(+). Its pathway is metabolic intermediate biosynthesis; chorismate biosynthesis; chorismate from D-erythrose 4-phosphate and phosphoenolpyruvate: step 4/7. Functionally, involved in the biosynthesis of the chorismate, which leads to the biosynthesis of aromatic amino acids. Catalyzes the reversible NADPH linked reduction of 3-dehydroshikimate (DHSA) to yield shikimate (SA). The chain is Shikimate dehydrogenase (NADP(+)) from Haemophilus influenzae (strain PittEE).